The following is a 471-amino-acid chain: MPSSGDAAGRRPHVVLIPSAGMGHLVPFGRLAVALSSGHGCDVSLVTVLPTVSTAESKHLDALFDAFPAVRRLDFELAPFDASEFPGADPFFLRFEAMRRSAPLLGPLLTGAGASALATDIALTSVVIPVAKEQGLPCHILFTASAAMLSLCAYFPTYLDANAGGGGGVGDVDIPGVYRIPKASIPQALHDPNHLFTRQFVANGRSLTSAAGILVNTFDALEPEAVAALQQGKVASGFPPVFAVGPLLPASNQAKDPQANYMEWLDAQPARSVVYVSFGSRKAISREQLRELAAGLEGSGHRFLWVVKSTVVDRDDAAELGELLDEGFLERVEKRGLVTKAWVDQEEVLKHESVALFVSHCGWNSVTEAAASGVPVLALPRFGDQRVNSGVVARAGLGVWADTWSWEGEAGVIGAEEISEKVKAAMADEALRMKAASLAEAAAKAVAGGGSSHRCLAEFARLCQGGTCRTN.

Histidine 24 (proton acceptor) is an active-site residue. Histidine 24 lines the an anthocyanidin pocket. Aspartate 120 acts as the Charge relay in catalysis. Threonine 143 provides a ligand contact to UDP-alpha-D-glucose. Residues 280-281 (SR) form a UDP region. UDP-alpha-D-glucose-binding residues include valine 343, glutamine 345, histidine 360, tryptophan 363, asparagine 364, serine 365, and glutamate 368. An an anthocyanidin-binding site is contributed by glycine 383. UDP-alpha-D-glucose-binding residues include aspartate 384 and glutamine 385.

It belongs to the UDP-glycosyltransferase family.

The enzyme catalyses a 3'-hydro-2'-hydroxy-beta-oxodihydrochalcone + UDP-alpha-D-glucose = a 3'-(beta-D-glucopyranosyl)-2'-hydroxy-beta-oxodihydrochalcone + UDP + H(+). In terms of biological role, UDP-glucose-dependent glucosyltransferase catalyzing the c-glucosylation of 2-hydroxyflavanones. Acts preferentially on the dibenzoylmethane tautomers formed in equilibrium with 2-hydroxyflavanones. No activity with naringenin or naringenin chalcone. In Oryza sativa subsp. indica (Rice), this protein is UDP-glycosyltransferase CGT.